A 1124-amino-acid chain; its full sequence is Tyrosine-protein kinase JAK3 (1124 aa).

The interval 1–223 (MAPPSEETPL…RRTVRRALRR (223 aa)) is interaction with cytokine/interferon/growth hormone receptors. Serine 17 is subject to Phosphoserine. An FERM domain is found at 24–356 (GALHVLLPAR…GYFRLTTDSQ (333 aa)). Residues 375-475 (QCHGPITLDF…GVAVTLTSCC (101 aa)) enclose the SH2; atypical domain. Positions 521–781 (LEWHENLGHG…AVIRDLNSLI (261 aa)) constitute a Protein kinase 1 domain. A Phosphotyrosine; by autocatalysis modification is found at tyrosine 785. The Protein kinase 2 domain maps to 822 to 1111 (LKYISQLGKG…SRGCETHAFT (290 aa)). Residues 828-836 (LGKGNFGSV) and lysine 855 contribute to the ATP site. Residues tyrosine 904 and tyrosine 939 each carry the phosphotyrosine modification. The Proton acceptor role is filled by aspartate 949. Phosphotyrosine; by autocatalysis occurs at positions 980 and 981.

The protein belongs to the protein kinase superfamily. Tyr protein kinase family. JAK subfamily. In terms of assembly, interacts with STAM2 and MYO18A. Interacts with SHB. Interacts with CD69. In terms of processing, tyrosine phosphorylated in response to IL-2 and IL-4. Dephosphorylation of Tyr-980 and Tyr-981 by PTPN2 negatively regulates cytokine-mediated signaling. In terms of tissue distribution, in NK cells and an NK-like cell line but not in resting T-cells or in other tissues. The S-form is more commonly seen in hematopoietic lines, whereas the B-form is detected in cells both of hematopoietic and epithelial origins.

It is found in the endomembrane system. The protein resides in the cytoplasm. The enzyme catalyses L-tyrosyl-[protein] + ATP = O-phospho-L-tyrosyl-[protein] + ADP + H(+). Its function is as follows. Non-receptor tyrosine kinase involved in various processes such as cell growth, development, or differentiation. Mediates essential signaling events in both innate and adaptive immunity and plays a crucial role in hematopoiesis during T-cells development. In the cytoplasm, plays a pivotal role in signal transduction via its association with type I receptors sharing the common subunit gamma such as IL2R, IL4R, IL7R, IL9R, IL15R and IL21R. Following ligand binding to cell surface receptors, phosphorylates specific tyrosine residues on the cytoplasmic tails of the receptor, creating docking sites for STATs proteins. Subsequently, phosphorylates the STATs proteins once they are recruited to the receptor. Phosphorylated STATs then form homodimer or heterodimers and translocate to the nucleus to activate gene transcription. For example, upon IL2R activation by IL2, JAK1 and JAK3 molecules bind to IL2R beta (IL2RB) and gamma chain (IL2RG) subunits inducing the tyrosine phosphorylation of both receptor subunits on their cytoplasmic domain. Then, STAT5A and STAT5B are recruited, phosphorylated and activated by JAK1 and JAK3. Once activated, dimerized STAT5 translocates to the nucleus and promotes the transcription of specific target genes in a cytokine-specific fashion. In Homo sapiens (Human), this protein is Tyrosine-protein kinase JAK3.